The chain runs to 240 residues: Ubiquinone biosynthesis O-methyltransferase (240 aa).

Positions 44, 64, 85, and 129 each coordinate S-adenosyl-L-methionine.

The protein belongs to the methyltransferase superfamily. UbiG/COQ3 family.

The catalysed reaction is a 3-demethylubiquinol + S-adenosyl-L-methionine = a ubiquinol + S-adenosyl-L-homocysteine + H(+). The enzyme catalyses a 3-(all-trans-polyprenyl)benzene-1,2-diol + S-adenosyl-L-methionine = a 2-methoxy-6-(all-trans-polyprenyl)phenol + S-adenosyl-L-homocysteine + H(+). It participates in cofactor biosynthesis; ubiquinone biosynthesis. Functionally, O-methyltransferase that catalyzes the 2 O-methylation steps in the ubiquinone biosynthetic pathway. This chain is Ubiquinone biosynthesis O-methyltransferase, found in Escherichia coli O9:H4 (strain HS).